Consider the following 429-residue polypeptide: Ribosomal RNA small subunit methyltransferase B (429 aa).

S-adenosyl-L-methionine is bound by residues 254-260, Asp277, Asp303, and Asp322; that span reads CAAPGGK. Catalysis depends on Cys375, which acts as the Nucleophile. A disordered region spans residues 397-419; sequence ALSETGTPDQPGQQNLPGGEEGD. A compositionally biased stretch (polar residues) spans 400–412; the sequence is ETGTPDQPGQQNL.

The protein belongs to the class I-like SAM-binding methyltransferase superfamily. RsmB/NOP family.

The protein resides in the cytoplasm. It catalyses the reaction cytidine(967) in 16S rRNA + S-adenosyl-L-methionine = 5-methylcytidine(967) in 16S rRNA + S-adenosyl-L-homocysteine + H(+). Functionally, specifically methylates the cytosine at position 967 (m5C967) of 16S rRNA. This Salmonella paratyphi A (strain ATCC 9150 / SARB42) protein is Ribosomal RNA small subunit methyltransferase B.